Here is a 241-residue protein sequence, read N- to C-terminus: Orotidine 5'-phosphate decarboxylase (241 aa).

Residues Asp-19, Lys-41, 69–78 (DLKFFDIPAT), Thr-124, Arg-185, Gln-194, Gly-214, and Arg-215 each bind substrate. The active-site Proton donor is Lys-71.

Belongs to the OMP decarboxylase family. Type 1 subfamily. In terms of assembly, homodimer.

The catalysed reaction is orotidine 5'-phosphate + H(+) = UMP + CO2. Its pathway is pyrimidine metabolism; UMP biosynthesis via de novo pathway; UMP from orotate: step 2/2. Its function is as follows. Catalyzes the decarboxylation of orotidine 5'-monophosphate (OMP) to uridine 5'-monophosphate (UMP). This chain is Orotidine 5'-phosphate decarboxylase, found in Stenotrophomonas maltophilia (strain K279a).